The chain runs to 268 residues: Thiazole synthase (268 aa).

Lysine 100 acts as the Schiff-base intermediate with DXP in catalysis. 1-deoxy-D-xylulose 5-phosphate contacts are provided by residues glycine 161, 187 to 188 (AG), and 209 to 210 (NT). Residues 248-268 (ATPSSPSEGMITGSPHSAANN) are disordered.

Belongs to the ThiG family. Homotetramer. Forms heterodimers with either ThiH or ThiS.

It localises to the cytoplasm. The catalysed reaction is [ThiS sulfur-carrier protein]-C-terminal-Gly-aminoethanethioate + 2-iminoacetate + 1-deoxy-D-xylulose 5-phosphate = [ThiS sulfur-carrier protein]-C-terminal Gly-Gly + 2-[(2R,5Z)-2-carboxy-4-methylthiazol-5(2H)-ylidene]ethyl phosphate + 2 H2O + H(+). Its pathway is cofactor biosynthesis; thiamine diphosphate biosynthesis. Catalyzes the rearrangement of 1-deoxy-D-xylulose 5-phosphate (DXP) to produce the thiazole phosphate moiety of thiamine. Sulfur is provided by the thiocarboxylate moiety of the carrier protein ThiS. In vitro, sulfur can be provided by H(2)S. This chain is Thiazole synthase, found in Nitrosomonas eutropha (strain DSM 101675 / C91 / Nm57).